Reading from the N-terminus, the 287-residue chain is Probable endoribonuclease YicC (287 aa).

It belongs to the YicC/YloC family. A divalent metal cation serves as cofactor.

Its function is as follows. Probably a ssRNA endonuclease. Functionally, might contribute to small RNA (sRNA) regulation. This is Probable endoribonuclease YicC from Haemophilus influenzae (strain ATCC 51907 / DSM 11121 / KW20 / Rd).